The chain runs to 559 residues: Dihydroxy-acid dehydratase (559 aa).

Cys52 contacts [2Fe-2S] cluster. Asp84 serves as a coordination point for Mg(2+). Residue Cys125 participates in [2Fe-2S] cluster binding. Mg(2+)-binding residues include Asp126 and Lys127. Lys127 is subject to N6-carboxylysine. Cys197 lines the [2Fe-2S] cluster pocket. Position 447 (Glu447) interacts with Mg(2+). Residue Ser473 is the Proton acceptor of the active site.

This sequence belongs to the IlvD/Edd family. As to quaternary structure, homodimer. The cofactor is [2Fe-2S] cluster. Mg(2+) is required as a cofactor.

The catalysed reaction is (2R)-2,3-dihydroxy-3-methylbutanoate = 3-methyl-2-oxobutanoate + H2O. It catalyses the reaction (2R,3R)-2,3-dihydroxy-3-methylpentanoate = (S)-3-methyl-2-oxopentanoate + H2O. It functions in the pathway amino-acid biosynthesis; L-isoleucine biosynthesis; L-isoleucine from 2-oxobutanoate: step 3/4. It participates in amino-acid biosynthesis; L-valine biosynthesis; L-valine from pyruvate: step 3/4. Its function is as follows. Functions in the biosynthesis of branched-chain amino acids. Catalyzes the dehydration of (2R,3R)-2,3-dihydroxy-3-methylpentanoate (2,3-dihydroxy-3-methylvalerate) into 2-oxo-3-methylpentanoate (2-oxo-3-methylvalerate) and of (2R)-2,3-dihydroxy-3-methylbutanoate (2,3-dihydroxyisovalerate) into 2-oxo-3-methylbutanoate (2-oxoisovalerate), the penultimate precursor to L-isoleucine and L-valine, respectively. This is Dihydroxy-acid dehydratase from Roseiflexus castenholzii (strain DSM 13941 / HLO8).